Reading from the N-terminus, the 193-residue chain is ATP synthase subunit delta (193 aa).

This sequence belongs to the ATPase delta chain family. As to quaternary structure, F-type ATPases have 2 components, F(1) - the catalytic core - and F(0) - the membrane proton channel. F(1) has five subunits: alpha(3), beta(3), gamma(1), delta(1), epsilon(1). F(0) has three main subunits: a(1), b(2) and c(10-14). The alpha and beta chains form an alternating ring which encloses part of the gamma chain. F(1) is attached to F(0) by a central stalk formed by the gamma and epsilon chains, while a peripheral stalk is formed by the delta and b chains.

It is found in the cell inner membrane. F(1)F(0) ATP synthase produces ATP from ADP in the presence of a proton or sodium gradient. F-type ATPases consist of two structural domains, F(1) containing the extramembraneous catalytic core and F(0) containing the membrane proton channel, linked together by a central stalk and a peripheral stalk. During catalysis, ATP synthesis in the catalytic domain of F(1) is coupled via a rotary mechanism of the central stalk subunits to proton translocation. Functionally, this protein is part of the stalk that links CF(0) to CF(1). It either transmits conformational changes from CF(0) to CF(1) or is implicated in proton conduction. The chain is ATP synthase subunit delta from Allorhizobium ampelinum (strain ATCC BAA-846 / DSM 112012 / S4) (Agrobacterium vitis (strain S4)).